The following is an 83-amino-acid chain: Large ribosomal subunit protein bL27 (83 aa).

The segment at 1–26 is disordered; that stretch reads MAHKKAGGSSKNGRDSRGQRRGVKRF.

It belongs to the bacterial ribosomal protein bL27 family.

The polypeptide is Large ribosomal subunit protein bL27 (Desulfosudis oleivorans (strain DSM 6200 / JCM 39069 / Hxd3) (Desulfococcus oleovorans)).